The primary structure comprises 580 residues: CDKN2A-interacting protein (580 aa).

An N-acetylalanine modification is found at Ala-2. An XRN2-binding (XTBD) domain is found at 19–133 (VEALRCDGET…KVKKRGISSS (115 aa)). Residues 129-356 (GISSSNEGVE…PKSSSSTNTS (228 aa)) form a disordered region. Phosphoserine is present on Ser-131. A compositionally biased stretch (basic and acidic residues) spans 155–167 (EQDHAKTSAKTER). Residues 168–179 (ASAQQENSSTCI) show a composition bias toward polar residues. Lys-184 participates in a covalent cross-link: Glycyl lysine isopeptide (Lys-Gly) (interchain with G-Cter in SUMO1). Residues 185–228 (SESGNSARSSGISSQNSSTSDGDRSVSSQSSSSVSSQVTTAGSG) are compositionally biased toward low complexity. The segment covering 231–240 (SEAEAPDKHG) has biased composition (basic and acidic residues). Residue Ser-241 is modified to Phosphoserine. Positions 248–269 (LKSSVNSHMTQSTDSRQQSGSP) are enriched in polar residues. Low complexity-rich tracts occupy residues 274–313 (LEGS…PSSE) and 321–356 (SKTS…TNTS). Thr-346 is modified (phosphothreonine). Phosphoserine is present on Ser-389. Residues 462-537 (NHGELLNAAI…SREALKLFLK (76 aa)) form the DRBM domain.

The protein belongs to the CARF family. As to quaternary structure, interacts with CDKN2A/p14ARF, p53/TP53 and MDM2. Interacts with CHEK2 and MAPK3. Interacts with XRN2. In terms of processing, may be ubiquitinated. As to expression, ubiquitously expressed.

It is found in the nucleus. Its subcellular location is the nucleoplasm. In terms of biological role, regulates DNA damage response in a dose-dependent manner through a number of signaling pathways involved in cell proliferation, apoptosis and senescence. This chain is CDKN2A-interacting protein (CDKN2AIP), found in Homo sapiens (Human).